We begin with the raw amino-acid sequence, 119 residues long: NADH dehydrogenase [ubiquinone] 1 subunit C2 (119 aa).

A helical membrane pass occupies residues 56 to 75; the sequence is GLHRQLLYITAFFFAGYYLV.

It belongs to the complex I NDUFC2 subunit family. Complex I is composed of 45 different subunits. Interacts with TMEM242.

It is found in the mitochondrion inner membrane. In terms of biological role, accessory subunit of the mitochondrial membrane respiratory chain NADH dehydrogenase (Complex I), that is believed not to be involved in catalysis but required for the complex assembly. Complex I functions in the transfer of electrons from NADH to the respiratory chain. The immediate electron acceptor for the enzyme is believed to be ubiquinone. This Pan troglodytes (Chimpanzee) protein is NADH dehydrogenase [ubiquinone] 1 subunit C2.